Consider the following 912-residue polypeptide: Transcription factor bHLH140 (912 aa).

A disordered region spans residues 1 to 57 (MDDFNLRSENPNSSSTTSSSSSSFHRHKSETGNTKRSRSTSTLSTDPQSVAARDRRH). Over residues 13-23 (SSSTTSSSSSS) the composition is skewed to low complexity. The bHLH domain occupies 43 to 92 (LSTDPQSVAARDRRHRISDRFKILQSMVPGGAKMDTVSMLDEAISYVKFL). 234–241 (GPPGSGKS) lines the ATP pocket. The region spanning 511–690 (KAKASQKNID…KYKGSQDKAV (180 aa)) is the Macro domain. Residues 657–666 (PKRSSQTAVS) show a composition bias toward polar residues. A disordered region spans residues 657–706 (PKRSSQTAVSDSGEDIKEDSERNKKYKGSQDKAVTNNLESESLEDTRGSG). An HIT domain is found at 720–829 (LHSIAMHPER…SQDFNSDSLK (110 aa)). Residues 870 to 893 (LRCNRCRSAHPNIPKLKSHVRSCH) form a C2H2-type zinc finger.

As to quaternary structure, homodimer.

Its subcellular location is the nucleus. The sequence is that of Transcription factor bHLH140 (BHLH140) from Arabidopsis thaliana (Mouse-ear cress).